Consider the following 211-residue polypeptide: Lysozyme g (211 aa).

The N-terminal stretch at 1–26 is a signal peptide; it reads MLGKNDPMCLVLVLLGLTALLGICQG. 2 disulfide bridges follow: Cys30–Cys86 and Cys44–Cys55. Active-site residues include Glu99 and Asp112.

This sequence belongs to the glycosyl hydrolase 23 family. In terms of tissue distribution, granulocyte compartment of myelomonocytic cells.

It is found in the secreted. It carries out the reaction Hydrolysis of (1-&gt;4)-beta-linkages between N-acetylmuramic acid and N-acetyl-D-glucosamine residues in a peptidoglycan and between N-acetyl-D-glucosamine residues in chitodextrins.. This chain is Lysozyme g, found in Gallus gallus (Chicken).